Reading from the N-terminus, the 431-residue chain is Serine--tRNA ligase (431 aa).

237-239 contacts L-serine; that stretch reads TAE. 268 to 270 is an ATP binding site; that stretch reads RSE. Glu-291 is an L-serine binding site. Position 355–358 (355–358) interacts with ATP; the sequence is EISS. Ser-390 serves as a coordination point for L-serine.

Belongs to the class-II aminoacyl-tRNA synthetase family. Type-1 seryl-tRNA synthetase subfamily. In terms of assembly, homodimer. The tRNA molecule binds across the dimer.

Its subcellular location is the cytoplasm. The catalysed reaction is tRNA(Ser) + L-serine + ATP = L-seryl-tRNA(Ser) + AMP + diphosphate + H(+). It carries out the reaction tRNA(Sec) + L-serine + ATP = L-seryl-tRNA(Sec) + AMP + diphosphate + H(+). The protein operates within aminoacyl-tRNA biosynthesis; selenocysteinyl-tRNA(Sec) biosynthesis; L-seryl-tRNA(Sec) from L-serine and tRNA(Sec): step 1/1. In terms of biological role, catalyzes the attachment of serine to tRNA(Ser). Is also able to aminoacylate tRNA(Sec) with serine, to form the misacylated tRNA L-seryl-tRNA(Sec), which will be further converted into selenocysteinyl-tRNA(Sec). The sequence is that of Serine--tRNA ligase from Neisseria gonorrhoeae (strain NCCP11945).